Here is a 255-residue protein sequence, read N- to C-terminus: 1-(5-phosphoribosyl)-5-[(5-phosphoribosylamino)methylideneamino] imidazole-4-carboxamide isomerase (255 aa).

D8 serves as the catalytic Proton acceptor. The Proton donor role is filled by D129.

It belongs to the HisA/HisF family.

The protein localises to the cytoplasm. It carries out the reaction 1-(5-phospho-beta-D-ribosyl)-5-[(5-phospho-beta-D-ribosylamino)methylideneamino]imidazole-4-carboxamide = 5-[(5-phospho-1-deoxy-D-ribulos-1-ylimino)methylamino]-1-(5-phospho-beta-D-ribosyl)imidazole-4-carboxamide. It participates in amino-acid biosynthesis; L-histidine biosynthesis; L-histidine from 5-phospho-alpha-D-ribose 1-diphosphate: step 4/9. The polypeptide is 1-(5-phosphoribosyl)-5-[(5-phosphoribosylamino)methylideneamino] imidazole-4-carboxamide isomerase (Prochlorococcus marinus (strain AS9601)).